Here is a 284-residue protein sequence, read N- to C-terminus: 2-dehydro-3-deoxyphosphooctonate aldolase (284 aa).

It belongs to the KdsA family.

The protein resides in the cytoplasm. The catalysed reaction is D-arabinose 5-phosphate + phosphoenolpyruvate + H2O = 3-deoxy-alpha-D-manno-2-octulosonate-8-phosphate + phosphate. It participates in carbohydrate biosynthesis; 3-deoxy-D-manno-octulosonate biosynthesis; 3-deoxy-D-manno-octulosonate from D-ribulose 5-phosphate: step 2/3. It functions in the pathway bacterial outer membrane biogenesis; lipopolysaccharide biosynthesis. This Burkholderia cenocepacia (strain HI2424) protein is 2-dehydro-3-deoxyphosphooctonate aldolase.